Reading from the N-terminus, the 365-residue chain is tRNA-specific 2-thiouridylase MnmA (365 aa).

ATP is bound by residues 14–21 (AMSGGVDS) and L40. C108 acts as the Nucleophile in catalysis. C108 and C204 are disulfide-bonded. G132 lines the ATP pocket. Residues 154–156 (KDQ) form an interaction with tRNA region. C204 functions as the Cysteine persulfide intermediate in the catalytic mechanism.

It belongs to the MnmA/TRMU family.

Its subcellular location is the cytoplasm. It carries out the reaction S-sulfanyl-L-cysteinyl-[protein] + uridine(34) in tRNA + AH2 + ATP = 2-thiouridine(34) in tRNA + L-cysteinyl-[protein] + A + AMP + diphosphate + H(+). Catalyzes the 2-thiolation of uridine at the wobble position (U34) of tRNA, leading to the formation of s(2)U34. The chain is tRNA-specific 2-thiouridylase MnmA from Rickettsia peacockii (strain Rustic).